Consider the following 178-residue polypeptide: ATP synthase subunit delta (178 aa).

Belongs to the ATPase delta chain family. In terms of assembly, F-type ATPases have 2 components, F(1) - the catalytic core - and F(0) - the membrane proton channel. F(1) has five subunits: alpha(3), beta(3), gamma(1), delta(1), epsilon(1). F(0) has three main subunits: a(1), b(2) and c(10-14). The alpha and beta chains form an alternating ring which encloses part of the gamma chain. F(1) is attached to F(0) by a central stalk formed by the gamma and epsilon chains, while a peripheral stalk is formed by the delta and b chains.

The protein localises to the cell inner membrane. Its function is as follows. F(1)F(0) ATP synthase produces ATP from ADP in the presence of a proton or sodium gradient. F-type ATPases consist of two structural domains, F(1) containing the extramembraneous catalytic core and F(0) containing the membrane proton channel, linked together by a central stalk and a peripheral stalk. During catalysis, ATP synthesis in the catalytic domain of F(1) is coupled via a rotary mechanism of the central stalk subunits to proton translocation. This protein is part of the stalk that links CF(0) to CF(1). It either transmits conformational changes from CF(0) to CF(1) or is implicated in proton conduction. The sequence is that of ATP synthase subunit delta from Nitrosospira multiformis (strain ATCC 25196 / NCIMB 11849 / C 71).